The following is a 921-amino-acid chain: Collagen alpha-1(IX) chain (921 aa).

The first 23 residues, 1–23 (MKTCWKIPVFFFVCSFLEPWASA), serve as a signal peptide directing secretion. A nonhelical region (NC4) region spans residues 24 to 268 (AVKRRPRFPV…ITPSQTTDER (245 aa)). 2 cysteine pairs are disulfide-bonded: Cys44-Cys242 and Cys198-Cys252. The Laminin G-like domain occupies 50–244 (GQDDLPGFDL…LQWMLIHCDP (195 aa)). An N-linked (GlcNAc...) asparagine glycan is attached at Asn171. Positions 213, 215, and 253 each coordinate Zn(2+). 2 disordered regions span residues 254–759 (ELPA…APTD) and 783–905 (RPDS…EPAS). Collagen-like domains lie at 269–324 (GPPG…TPGA), 325–356 (DGLT…GFPG), 358–403 (GIPG…GTIG), 416–472 (PPGR…GLRG), 473–516 (ITGI…AGPK), 587–643 (EKGS…GKLG), 655–712 (GPPG…GEPG), and 713–755 (LRGP…PPGR). The tract at residues 269–405 (GPPGEQGPPG…PGPRGTIGFH (137 aa)) is triple-helical region (COL3). Composition is skewed to pro residues over residues 273-285 (EQGP…PPGV) and 298-307 (KGPPGPPGPA). Over residues 368–383 (TAGLPGELGRVGPVGD) the composition is skewed to low complexity. A compositionally biased stretch (pro residues) spans 387-398 (RGPPGPPGPPGP). Residues 406–417 (DGDPLCPNACPP) are nonhelical region (NC3). A triple-helical region (COL2) region spans residues 418-756 (GRSGYPGLPG…PGVQGPPGRA (339 aa)). Residues 479–489 (DKGEKGARGLD) show a composition bias toward basic and acidic residues. 2 stretches are compositionally biased toward low complexity: residues 602 to 621 (NSGK…RGPQ) and 630 to 650 (LGPV…SPGL). The nonhelical region (NC2) stretch occupies residues 757–786 (PTDQHIKQVCMRVIQEHFAEMAASLKRPDS). Positions 787-901 (GATGLPGRPG…PGPPGLPGFC (115 aa)) are triple-helical region (COL1). Collagen-like domains follow at residues 790–847 (GLPG…GPPG) and 848–899 (RGPN…GLPG). Residues 794-804 (RPGPPGPPGPP) are compositionally biased toward pro residues. The segment covering 833–845 (PKGDLGEKGERGP) has biased composition (basic and acidic residues). The span at 888 to 897 (VPGPPGPPGL) shows a compositional bias: pro residues. The nonhelical region (NC1) stretch occupies residues 902–921 (EPASCTMQAGQRAFNKGPDP).

This sequence belongs to the fibril-associated collagens with interrupted helices (FACIT) family. As to quaternary structure, heterotrimer of an alpha 1(IX), an alpha 2(IX) and an alpha 3(IX) chain. Covalently linked to the telopeptides of type II collagen by lysine-derived cross-links. Post-translationally, prolines at the third position of the tripeptide repeating unit (G-X-Y) are hydroxylated in some or all of the chains.

The protein localises to the secreted. Its subcellular location is the extracellular space. It is found in the extracellular matrix. Structural component of hyaline cartilage and vitreous of the eye. This Homo sapiens (Human) protein is Collagen alpha-1(IX) chain (COL9A1).